A 122-amino-acid chain; its full sequence is Large ribosomal subunit protein uL14 (122 aa).

The protein belongs to the universal ribosomal protein uL14 family. Part of the 50S ribosomal subunit. Forms a cluster with proteins L3 and L19. In the 70S ribosome, L14 and L19 interact and together make contacts with the 16S rRNA in bridges B5 and B8.

Functionally, binds to 23S rRNA. Forms part of two intersubunit bridges in the 70S ribosome. The sequence is that of Large ribosomal subunit protein uL14 from Carsonella ruddii (strain PV).